We begin with the raw amino-acid sequence, 235 residues long: 2-C-methyl-D-erythritol 4-phosphate cytidylyltransferase (235 aa).

This sequence belongs to the IspD/TarI cytidylyltransferase family. IspD subfamily.

The enzyme catalyses 2-C-methyl-D-erythritol 4-phosphate + CTP + H(+) = 4-CDP-2-C-methyl-D-erythritol + diphosphate. It participates in isoprenoid biosynthesis; isopentenyl diphosphate biosynthesis via DXP pathway; isopentenyl diphosphate from 1-deoxy-D-xylulose 5-phosphate: step 2/6. In terms of biological role, catalyzes the formation of 4-diphosphocytidyl-2-C-methyl-D-erythritol from CTP and 2-C-methyl-D-erythritol 4-phosphate (MEP). The sequence is that of 2-C-methyl-D-erythritol 4-phosphate cytidylyltransferase from Pseudomonas putida (strain W619).